Reading from the N-terminus, the 162-residue chain is Small ribosomal subunit protein uS9 (162 aa).

This sequence belongs to the universal ribosomal protein uS9 family.

This is Small ribosomal subunit protein uS9 from Methylobacterium nodulans (strain LMG 21967 / CNCM I-2342 / ORS 2060).